Consider the following 366-residue polypeptide: Isocitrate dehydrogenase [NAD] subunit alpha, mitochondrial (366 aa).

A mitochondrion-targeting transit peptide spans 1–27 (MAGPAWISKVSRLLGAFHNQKQVTRGF). At Lys77 the chain carries N6-succinyllysine. A Phosphothreonine modification is found at Thr101. Substrate contacts are provided by Arg115, Arg125, and Arg146. N6-acetyllysine is present on Lys223. The Mg(2+) site is built by Asp233, Asp257, and Asp261. An N6-acetyllysine; alternate modification is found at Lys343. The residue at position 343 (Lys343) is an N6-succinyllysine; alternate. Lys350 carries the post-translational modification N6-succinyllysine.

The protein belongs to the isocitrate and isopropylmalate dehydrogenases family. Heterooligomer of subunits alpha (IDH3A), beta (IDH3B), and gamma (IDH3G) in the apparent ratio of 2:1:1. The heterodimer containing one IDH3A and one IDH3B subunit and the heterodimer containing one IDH3A and one IDH3G subunit assemble into a heterotetramer (which contains two subunits of IDH3A, one of IDH3B and one of IDH3G) and further into the heterooctamer. The cofactor is Mg(2+). Requires Mn(2+) as cofactor.

It is found in the mitochondrion. The enzyme catalyses D-threo-isocitrate + NAD(+) = 2-oxoglutarate + CO2 + NADH. With respect to regulation, the heterotetramer and the heterodimer composed of IDH3A and IDH3G subunits can be allosterically activated by citrate (CIT) or/and ADP, and the two activators can act independently or synergistically. The heterodimer composed of IDH3A and IDH3B subunits cannot be allosterically regulated and the allosteric regulation of the heterotetramer is through the IDH3G subunit and not the IDH3B subunit. The IDH3G subunit contains the allosteric site which consists of a CIT-binding site and an ADP-binding site, and the binding of CIT and ADP causes conformational changes at the allosteric site which are transmitted to the active site in the catalytic subunit (IDH3A) through a cascade of conformational changes at the heterodimer interface, leading to stabilization of the isocitrate-binding at the active site and thus activation of the enzyme. ATP can activate the heterotetramer and the heterodimer composed of IDH3A and IDH3G subunits at low concentrations but inhibits their activities at high concentrations, whereas ATP exhibits only inhibitory effect on the heterodimer composed of IDH3A and IDH3B subunits. Functionally, catalytic subunit of the enzyme which catalyzes the decarboxylation of isocitrate (ICT) into alpha-ketoglutarate. The heterodimer composed of the alpha (IDH3A) and beta (IDH3B) subunits and the heterodimer composed of the alpha (IDH3A) and gamma (IDH3G) subunits, have considerable basal activity but the full activity of the heterotetramer (containing two subunits of IDH3A, one of IDH3B and one of IDH3G) requires the assembly and cooperative function of both heterodimers. The sequence is that of Isocitrate dehydrogenase [NAD] subunit alpha, mitochondrial (IDH3A) from Sus scrofa (Pig).